The sequence spans 345 residues: Ferrochelatase (345 aa).

The Fe cation site is built by His215 and Glu296.

Belongs to the ferrochelatase family.

Its subcellular location is the cytoplasm. The enzyme catalyses heme b + 2 H(+) = protoporphyrin IX + Fe(2+). The protein operates within porphyrin-containing compound metabolism; protoheme biosynthesis; protoheme from protoporphyrin-IX: step 1/1. Catalyzes the ferrous insertion into protoporphyrin IX. This is Ferrochelatase from Rhodopseudomonas palustris (strain BisB5).